A 304-amino-acid chain; its full sequence is UTP--glucose-1-phosphate uridylyltransferase 1 (304 aa).

This sequence belongs to the UDPGP type 2 family.

It carries out the reaction alpha-D-glucose 1-phosphate + UTP + H(+) = UDP-alpha-D-glucose + diphosphate. Its pathway is carbohydrate metabolism; nucleotide-sugar metabolism. The polypeptide is UTP--glucose-1-phosphate uridylyltransferase 1 (hasC1) (Streptococcus pyogenes serotype M1).